Consider the following 407-residue polypeptide: MNQKPSLFARLADGSLVLQILVGIIAGVILATVSKSGAESVAFLGQLFVGALKAIAPILVFILVAASIANQKKNAKTNMRPIVILYLFGTFSAAVTAVLMSFAFPTTLALTLDAAQASPPEGIGEVIHTLLFQLVDNPVNAVITGNYIGILAWGVGLGLALHHATDSTKLVFADVSHGVSQMVRFIIRLAPIGIFGLVSSTFATTGFSAIAGYMHLLLVLLGAMAIMALIINPAIVFFKIRRNPYPLVFTCLRESGVTAFFTRSSAANIPVNMALCEKLKLHEDTYSVSIPLGATINMGGAAITITILTLAAANSMGIQVDILTAILLSVVAGVSACGASGVAGGSLLLIPLACSLFGISNDVAMQVVAVGFIIGVIQDSAETGLNSSTDVIFTAAACEAAERKENA.

9 helical membrane-spanning segments follow: residues 14-34 (GSLV…ATVS), 48-68 (FVGA…AASI), 82-102 (IVIL…LMSF), 141-161 (AVIT…GLAL), 192-212 (IGIF…AIAG), 218-238 (LVLL…IVFF), 290-310 (IPLG…ILTL), 316-336 (MGIQ…GVSA), and 363-383 (VAMQ…SAET).

This sequence belongs to the dicarboxylate/amino acid:cation symporter (DAACS) (TC 2.A.23) family.

The protein resides in the cell inner membrane. The enzyme catalyses L-serine(in) + Na(+)(in) = L-serine(out) + Na(+)(out). It catalyses the reaction L-threonine(in) + Na(+)(in) = L-threonine(out) + Na(+)(out). Involved in the import of serine and threonine into the cell, with the concomitant import of sodium (symport system). This is Serine/threonine transporter SstT from Shewanella pealeana (strain ATCC 700345 / ANG-SQ1).